The sequence spans 266 residues: GTP cyclohydrolase III (266 aa).

Belongs to the archaeal-type GTP cyclohydrolase family.

The enzyme catalyses GTP + 3 H2O = 2-amino-5-formylamino-6-(5-phospho-D-ribosylamino)pyrimidin-4(3H)-one + 2 phosphate + 2 H(+). Its function is as follows. Catalyzes the formation of 2-amino-5-formylamino-6-ribofuranosylamino-4(3H)-pyrimidinone ribonucleotide monophosphate and inorganic phosphate from GTP. Also has an independent pyrophosphate phosphohydrolase activity. The sequence is that of GTP cyclohydrolase III from Methanococcus maripaludis (strain C5 / ATCC BAA-1333).